Consider the following 577-residue polypeptide: Copine-8 (577 aa).

2 consecutive C2 domains span residues 19 to 146 (TSAT…RLEK) and 155 to 278 (KCGT…FNVY). Ca(2+) is bound by residues D52, D58, D112, D114, S117, K122, D124, D186, D192, D248, D250, and D256. Residue S273 is modified to Phosphoserine. Residues 322-523 (NFTVAIDFTA…VQFVPFRDYI (202 aa)) form the VWFA domain.

The protein belongs to the copine family. It depends on Ca(2+) as a cofactor.

Probable calcium-dependent phospholipid-binding protein that may play a role in calcium-mediated intracellular processes. This Mus musculus (Mouse) protein is Copine-8.